Here is a 100-residue protein sequence, read N- to C-terminus: UPF0213 protein YhbQ (100 aa).

Residues 2–77 (TPWYLYLIRT…KQLTKRQKER (76 aa)) form the GIY-YIG domain.

Belongs to the UPF0213 family.

This chain is UPF0213 protein YhbQ, found in Salmonella choleraesuis (strain SC-B67).